Reading from the N-terminus, the 225-residue chain is Prohead protease (225 aa).

Catalysis depends on residues His-65, Ser-114, and Glu-141.

Belongs to the HK97 prohead protease protein family. In terms of processing, cleaves itself autocatalytically to yield the mature form of the protease.

It localises to the virion. Protease involved in virion assembly and maturation. This chain is Prohead protease (4), found in Escherichia coli (Bacteriophage HK97).